Here is a 544-residue protein sequence, read N- to C-terminus: Chaperonin GroEL 2 (544 aa).

Residues 29-32 (TLGP), 86-90 (DGTTT), G413, 479-481 (NAA), and D495 each bind ATP.

This sequence belongs to the chaperonin (HSP60) family. Forms a cylinder of 14 subunits composed of two heptameric rings stacked back-to-back. Interacts with the co-chaperonin GroES.

It is found in the cytoplasm. The catalysed reaction is ATP + H2O + a folded polypeptide = ADP + phosphate + an unfolded polypeptide.. Functionally, together with its co-chaperonin GroES, plays an essential role in assisting protein folding. The GroEL-GroES system forms a nano-cage that allows encapsulation of the non-native substrate proteins and provides a physical environment optimized to promote and accelerate protein folding. This Synechococcus sp. (strain CC9605) protein is Chaperonin GroEL 2.